Reading from the N-terminus, the 347-residue chain is Isopentenyl-diphosphate delta-isomerase (347 aa).

Residues 1-31 (MDESNSQFEKRKRDHIRIALDPRSQTDGQNG) form a disordered region. The segment covering 8–20 (FEKRKRDHIRIAL) has biased composition (basic and acidic residues). 11–12 (RK) serves as a coordination point for substrate. FMN is bound by residues Ser-72, 73–75 (SMT), Ser-103, and Asn-132. A substrate-binding site is contributed by 103 to 105 (SQR). Residue Gln-166 coordinates substrate. Glu-167 is a binding site for Mg(2+). Residues Lys-198, Ser-223, Thr-228, 279–281 (GVR), and 300–301 (AK) contribute to the FMN site.

This sequence belongs to the IPP isomerase type 2 family. In terms of assembly, homooctamer. Dimer of tetramers. FMN serves as cofactor. NADPH is required as a cofactor. The cofactor is Mg(2+).

It localises to the cytoplasm. It carries out the reaction isopentenyl diphosphate = dimethylallyl diphosphate. Functionally, involved in the biosynthesis of isoprenoids. Catalyzes the 1,3-allylic rearrangement of the homoallylic substrate isopentenyl (IPP) to its allylic isomer, dimethylallyl diphosphate (DMAPP). This Bdellovibrio bacteriovorus (strain ATCC 15356 / DSM 50701 / NCIMB 9529 / HD100) protein is Isopentenyl-diphosphate delta-isomerase.